The following is a 709-amino-acid chain: Polyribonucleotide nucleotidyltransferase (709 aa).

Mg(2+)-binding residues include Asp487 and Asp493. In terms of domain architecture, KH spans 554–613 (PRIHTMKISSDKIKDVIGKGGAVIRALCEETGTTIEIEDDGTIKIAATEGAAAKEAIRRI). The 69-residue stretch at 623 to 691 (GKIYTGKVMR…RQGRIRLSIK (69 aa)) folds into the S1 motif domain.

The protein belongs to the polyribonucleotide nucleotidyltransferase family. As to quaternary structure, component of the RNA degradosome, which is a multiprotein complex involved in RNA processing and mRNA degradation. Mg(2+) serves as cofactor.

It localises to the cytoplasm. It carries out the reaction RNA(n+1) + phosphate = RNA(n) + a ribonucleoside 5'-diphosphate. Functionally, involved in mRNA degradation. Catalyzes the phosphorolysis of single-stranded polyribonucleotides processively in the 3'- to 5'-direction. This Aliivibrio fischeri (strain ATCC 700601 / ES114) (Vibrio fischeri) protein is Polyribonucleotide nucleotidyltransferase.